A 588-amino-acid polypeptide reads, in one-letter code: Glutamate--tRNA ligase (588 aa).

Residues 112-122 (PNPDFYLHLGS) carry the 'HIGH' region motif.

The protein belongs to the class-I aminoacyl-tRNA synthetase family. Glutamate--tRNA ligase type 2 subfamily.

Its subcellular location is the cytoplasm. It carries out the reaction tRNA(Glu) + L-glutamate + ATP = L-glutamyl-tRNA(Glu) + AMP + diphosphate. In terms of biological role, catalyzes the attachment of glutamate to tRNA(Glu) in a two-step reaction: glutamate is first activated by ATP to form Glu-AMP and then transferred to the acceptor end of tRNA(Glu). This Caldivirga maquilingensis (strain ATCC 700844 / DSM 13496 / JCM 10307 / IC-167) protein is Glutamate--tRNA ligase.